The chain runs to 110 residues: NADH-quinone oxidoreductase subunit K (110 aa).

3 helical membrane passes run 13-33, 41-61, and 73-93; these read LNHY…GLFM, ILMS…AFSV, and IIIL…LLIY.

Belongs to the complex I subunit 4L family. As to quaternary structure, NDH-1 is composed of 14 different subunits. Subunits NuoA, H, J, K, L, M, N constitute the membrane sector of the complex.

The protein resides in the cell inner membrane. The enzyme catalyses a quinone + NADH + 5 H(+)(in) = a quinol + NAD(+) + 4 H(+)(out). Its function is as follows. NDH-1 shuttles electrons from NADH, via FMN and iron-sulfur (Fe-S) centers, to quinones in the respiratory chain. The immediate electron acceptor for the enzyme in this species is believed to be ubiquinone. Couples the redox reaction to proton translocation (for every two electrons transferred, four hydrogen ions are translocated across the cytoplasmic membrane), and thus conserves the redox energy in a proton gradient. The chain is NADH-quinone oxidoreductase subunit K from Rickettsia typhi (strain ATCC VR-144 / Wilmington).